Consider the following 372-residue polypeptide: uncharacterized protein (372 aa).

The interval 328–353 (KKGQPCKDEDAVTVPLPSSDPGKETQ) is disordered.

Induces the SOS system when expressed in E.coli, therefore, it may play a role in DNA metabolism and/or in genome stability. This is an uncharacterized protein from Saccharomyces cerevisiae (strain ATCC 204508 / S288c) (Baker's yeast).